A 190-amino-acid chain; its full sequence is Dual-action ribosomal maturation protein DarP (190 aa).

The interval 1 to 31 is disordered; it reads MIHADHDDNLPDDEEGLPLPPSKSQRKRDMH.

It belongs to the DarP family.

It localises to the cytoplasm. Functionally, member of a network of 50S ribosomal subunit biogenesis factors which assembles along the 30S-50S interface, preventing incorrect 23S rRNA structures from forming. Promotes peptidyl transferase center (PTC) maturation. The sequence is that of Dual-action ribosomal maturation protein DarP from Aromatoleum aromaticum (strain DSM 19018 / LMG 30748 / EbN1) (Azoarcus sp. (strain EbN1)).